The following is a 119-amino-acid chain: Protein TusC (119 aa).

The protein belongs to the DsrF/TusC family. As to quaternary structure, heterohexamer, formed by a dimer of trimers. The hexameric TusBCD complex contains 2 copies each of TusB, TusC and TusD. The TusBCD complex interacts with TusE.

The protein resides in the cytoplasm. Part of a sulfur-relay system required for 2-thiolation of 5-methylaminomethyl-2-thiouridine (mnm(5)s(2)U) at tRNA wobble positions. This is Protein TusC from Cronobacter sakazakii (strain ATCC BAA-894) (Enterobacter sakazakii).